The chain runs to 451 residues: Bifunctional protein GlmU (451 aa).

The pyrophosphorylase stretch occupies residues M1–K236. UDP-N-acetyl-alpha-D-glucosamine-binding positions include L17 to G20, K31, Q79, G84 to T85, Y105 to D107, G144, E162, N177, and N234. Residue D107 participates in Mg(2+) binding. N234 lines the Mg(2+) pocket. Positions V237–N257 are linker. Residues G258–V451 are N-acetyltransferase. UDP-N-acetyl-alpha-D-glucosamine contacts are provided by R323 and K341. H353 acts as the Proton acceptor in catalysis. UDP-N-acetyl-alpha-D-glucosamine contacts are provided by Y356 and N367. Acetyl-CoA contacts are provided by residues A370, N376 to Y377, S395, A413, and R430.

The protein in the N-terminal section; belongs to the N-acetylglucosamine-1-phosphate uridyltransferase family. This sequence in the C-terminal section; belongs to the transferase hexapeptide repeat family. Homotrimer. Mg(2+) serves as cofactor.

It localises to the cytoplasm. It catalyses the reaction alpha-D-glucosamine 1-phosphate + acetyl-CoA = N-acetyl-alpha-D-glucosamine 1-phosphate + CoA + H(+). The catalysed reaction is N-acetyl-alpha-D-glucosamine 1-phosphate + UTP + H(+) = UDP-N-acetyl-alpha-D-glucosamine + diphosphate. It participates in nucleotide-sugar biosynthesis; UDP-N-acetyl-alpha-D-glucosamine biosynthesis; N-acetyl-alpha-D-glucosamine 1-phosphate from alpha-D-glucosamine 6-phosphate (route II): step 2/2. The protein operates within nucleotide-sugar biosynthesis; UDP-N-acetyl-alpha-D-glucosamine biosynthesis; UDP-N-acetyl-alpha-D-glucosamine from N-acetyl-alpha-D-glucosamine 1-phosphate: step 1/1. Its pathway is bacterial outer membrane biogenesis; LPS lipid A biosynthesis. In terms of biological role, catalyzes the last two sequential reactions in the de novo biosynthetic pathway for UDP-N-acetylglucosamine (UDP-GlcNAc). The C-terminal domain catalyzes the transfer of acetyl group from acetyl coenzyme A to glucosamine-1-phosphate (GlcN-1-P) to produce N-acetylglucosamine-1-phosphate (GlcNAc-1-P), which is converted into UDP-GlcNAc by the transfer of uridine 5-monophosphate (from uridine 5-triphosphate), a reaction catalyzed by the N-terminal domain. The chain is Bifunctional protein GlmU from Granulibacter bethesdensis (strain ATCC BAA-1260 / CGDNIH1).